A 511-amino-acid polypeptide reads, in one-letter code: D-alanine--D-alanyl carrier protein ligase (511 aa).

Position 152-153 (152-153 (TS)) interacts with ATP. Residue D199 coordinates D-alanine. 294–299 (NAYGPT) provides a ligand contact to ATP. V303 is a D-alanine binding site. ATP-binding positions include D385, 397–400 (YGGR), and K499. K499 contacts D-alanine.

This sequence belongs to the ATP-dependent AMP-binding enzyme family. DltA subfamily.

It localises to the cytoplasm. It catalyses the reaction holo-[D-alanyl-carrier protein] + D-alanine + ATP = D-alanyl-[D-alanyl-carrier protein] + AMP + diphosphate. It functions in the pathway cell wall biogenesis; lipoteichoic acid biosynthesis. Catalyzes the first step in the D-alanylation of lipoteichoic acid (LTA), the activation of D-alanine and its transfer onto the D-alanyl carrier protein (Dcp) DltC. In an ATP-dependent two-step reaction, forms a high energy D-alanyl-AMP intermediate, followed by transfer of the D-alanyl residue as a thiol ester to the phosphopantheinyl prosthetic group of the Dcp. D-alanylation of LTA plays an important role in modulating the properties of the cell wall in Gram-positive bacteria, influencing the net charge of the cell wall. This is D-alanine--D-alanyl carrier protein ligase from Streptococcus agalactiae serotype III (strain NEM316).